A 186-amino-acid polypeptide reads, in one-letter code: Imidazoleglycerol-phosphate dehydratase (186 aa).

This sequence belongs to the imidazoleglycerol-phosphate dehydratase family.

The protein localises to the cytoplasm. The enzyme catalyses D-erythro-1-(imidazol-4-yl)glycerol 3-phosphate = 3-(imidazol-4-yl)-2-oxopropyl phosphate + H2O. The protein operates within amino-acid biosynthesis; L-histidine biosynthesis; L-histidine from 5-phospho-alpha-D-ribose 1-diphosphate: step 6/9. This Dictyoglomus turgidum (strain DSM 6724 / Z-1310) protein is Imidazoleglycerol-phosphate dehydratase.